The chain runs to 222 residues: MALDIKICGLKTPEAVAAALDGGATHIGFIFFPKSPRHITPDAAARLRAAATGRAVAVAVTVDADDEALDEIVKTVRPDMLQLHGGETPERVRFLKERYNLPVMKAFSIREAGDLEAIAPYRGIADRFLFDAKPPKGSELPGGNGISFDWNLLAALDADIDYMLSGGLNADNIAEALLKTGAPGIDISSGVECAPGEKDVRLIENFFQAVADANAQPFARRA.

Belongs to the TrpF family.

It carries out the reaction N-(5-phospho-beta-D-ribosyl)anthranilate = 1-(2-carboxyphenylamino)-1-deoxy-D-ribulose 5-phosphate. The protein operates within amino-acid biosynthesis; L-tryptophan biosynthesis; L-tryptophan from chorismate: step 3/5. In Brucella abortus (strain S19), this protein is N-(5'-phosphoribosyl)anthranilate isomerase.